Consider the following 797-residue polypeptide: Protocadherin beta-11 (797 aa).

The signal sequence occupies residues 1–26 (MENGGTRTQQIRQVLLLFVLLGMSQA). Over 27-690 (GSETWSFSVA…AQTDFLTVYL (664 aa)) the chain is Extracellular. Cadherin domains lie at 35–133 (VAEE…SPIF), 138–242 (MLLE…SPEF), 247–347 (YEVK…APEI), 352–451 (ITSP…APTF), and 456–561 (YTLF…SPFV). Asn418, Asn436, Asn487, and Asn567 each carry an N-linked (GlcNAc...) asparagine glycan. One can recognise a Cadherin 6 domain in the interval 568–671 (GSAPCTELVP…LVDGFSQPFL (104 aa)). A helical transmembrane segment spans residues 691 to 711 (VVALASVSSLFFFSVLLFVAV). At 712 to 797 (RLCRRSRAAS…TFQNSFGFNF (86 aa)) the chain is on the cytoplasmic side.

It is found in the cell membrane. Functionally, potential calcium-dependent cell-adhesion protein. May be involved in the establishment and maintenance of specific neuronal connections in the brain. This is Protocadherin beta-11 (PCDHB11) from Pan troglodytes (Chimpanzee).